Consider the following 148-residue polypeptide: MNHIKWLSDLKKAGLLALGKGVITLLKRFSLVIVTLMMSIVVVLAAAKESPGDHVISFDEPIILMISIGIVVFLLIPPLVMSFFGNLVVRIISGVYQCFIVFTFLGLIPIGFLIPNGFLTILVSIAGTLVSIASVAVTLCIGKNKKDI.

4 helical membrane-spanning segments follow: residues 29–49 (FSLVIVTLMMSIVVVLAAAKE), 61–81 (PIILMISIGIVVFLLIPPLVM), 99–119 (FIVFTFLGLIPIGFLIPNGFL), and 121–141 (ILVSIAGTLVSIASVAVTLCI).

It is found in the cell membrane. This is an uncharacterized protein from Bacillus subtilis (strain 168).